Consider the following 254-residue polypeptide: Sensory rhodopsin (254 aa).

Residues 1-4 are Extracellular-facing; it reads MTGA. Residues 5-26 form a helical membrane-spanning segment; the sequence is VTSAYWLAAVAFLIGVGITAAL. The Cytoplasmic portion of the chain corresponds to 27–35; the sequence is YAKLEGSRA. The helical transmembrane segment at 36-57 threads the bilayer; it reads RTRLAALAVIPGFAGLSYVGMA. Topologically, residues 58–71 are extracellular; it reads LGIGTVTVNGAELV. The chain crosses the membrane as a helical span at residues 72-93; the sequence is GLRYVDWVVTTPLLVGFIGYNA. Topologically, residues 94–96 are cytoplasmic; sequence GAS. A helical membrane pass occupies residues 97–119; that stretch reads RRAIAGVMIADALMIVFGAAAVV. The Extracellular segment spans residues 120–123; that stretch reads SGGT. A helical transmembrane segment spans residues 124-151; that stretch reads LKWALFGVSALFHVSLFAYLYVIFPGGI. The Cytoplasmic portion of the chain corresponds to 152–154; the sequence is PDD. Residues 155–182 traverse the membrane as a helical segment; that stretch reads PMQRGLFSLLKNHVGLLWLAYPFVWLMG. The Extracellular segment spans residues 183 to 190; it reads PAGIGFTG. The chain crosses the membrane as a helical span at residues 191 to 223; it reads AVGAALTYAFLDVLAKVPYVYFFYARRQAFIDV. At Lys206 the chain carries N6-(retinylidene)lysine. Topologically, residues 224 to 254 are cytoplasmic; the sequence is TDSRAAAKGDGPAVGGEAPVATGDDAPTAAD. The disordered stretch occupies residues 231–254; the sequence is KGDGPAVGGEAPVATGDDAPTAAD.

The protein belongs to the archaeal/bacterial/fungal opsin family.

The protein localises to the cell membrane. Its function is as follows. Involved in the control of phototaxis. This is Sensory rhodopsin (sop) from Halorubrum sodomense.